Here is a 383-residue protein sequence, read N- to C-terminus: NAD(P) transhydrogenase subunit alpha part 1 (383 aa).

Residues 131-134 (QNMD), V181, 201-203 (DVR), and G231 each bind NAD(+).

Belongs to the AlaDH/PNT family. In terms of assembly, heterotrimer of two alpha chains and a beta (PntB) chain; in Rickettsia, the alpha chain is made of two subunits (PntAA and PntAB) and forms a dimer.

The catalysed reaction is NAD(+) + NADPH + H(+)(in) = NADH + NADP(+) + H(+)(out). Functionally, the transhydrogenation between NADH and NADP is coupled to respiration and ATP hydrolysis and functions as a proton pump across the membrane. The chain is NAD(P) transhydrogenase subunit alpha part 1 (pntAA) from Rickettsia prowazekii (strain Madrid E).